Reading from the N-terminus, the 126-residue chain is FCS-Like Zinc finger 7 (126 aa).

Residues 72–116 (SFLVNCGFCKRGLAPGRDIYMYKGDAAFCSIECREQQMEHDEGKT) form an FLZ-type zinc finger.

It belongs to the FLZ family. Interacts with KIN10 and KIN11 via its FLZ-type zinc finger domain. Interacts with KINB3 via its N-terminal part. Forms homodimer and heterodimer with FLZ1, FLZ2 and FLZ15 in vitro.

The protein resides in the cytoplasm. It is found in the nucleus. Functionally, may act as an adapter to facilitate the interaction of SnRK1 complex with effector proteins, conferring tissue- and stimulus-type specific differences in the SnRK1 regulation pathway. The protein is FCS-Like Zinc finger 7 of Arabidopsis thaliana (Mouse-ear cress).